Here is a 232-residue protein sequence, read N- to C-terminus: N-acetyltransferase 8B (232 aa).

Topologically, residues 1 to 62 are cytoplasmic; sequence MPRFEAQKSS…FLLLLGVPLA (62 aa). The chain crosses the membrane as a helical; Signal-anchor for type II membrane protein span at residues 63–83; sequence LVLVSGSWILAVICIFFLLLL. The N-acetyltransferase domain maps to 79–224; that stretch reads FLLLLLRLLA…WRLVDICFIQ (146 aa). Topologically, residues 84–232 are lumenal; the sequence is LRLLARQPWK…IQLNYSFPSA (149 aa). K109 is subject to N6-acetyllysine.

This sequence belongs to the NAT8 family. Post-translationally, acetylation on Lys-109 modulates enzymatic activity. In terms of tissue distribution, expressed in brain (at protein level).

Its subcellular location is the endoplasmic reticulum-Golgi intermediate compartment membrane. The protein localises to the endoplasmic reticulum membrane. The catalysed reaction is L-lysyl-[protein] + acetyl-CoA = N(6)-acetyl-L-lysyl-[protein] + CoA + H(+). Functionally, endoplasmic reticulum (ER)-membrane-bound lysine N-acetyltransferase catalyzing the N6-acetylation of lysine residues in the lumen of the ER in various proteins, including PROM1 and BACE1, using acetyl-CoA as acetyl donor. Thereby, may regulate apoptosis through the acetylation and the regulation of the expression of PROM1. Acetylates and stabilizes BACE1 immature protein, leading to increased steady-state levels in neurons. By acting on BACE1 expression, may regulate amyloid beta-peptide formation. N(6)-lysine acetylation in ER maintains protein homeostasis and regulates reticulophagy. This Mus musculus (Mouse) protein is N-acetyltransferase 8B.